Consider the following 607-residue polypeptide: DNA mismatch repair protein MutL (607 aa).

Positions 374–411 (RTEAGNEHVPSANRIQPPDPSIDMPDEPVPEQTDEPVA) are disordered. Acidic residues predominate over residues 397–407 (MPDEPVPEQTD).

This sequence belongs to the DNA mismatch repair MutL/HexB family.

In terms of biological role, this protein is involved in the repair of mismatches in DNA. It is required for dam-dependent methyl-directed DNA mismatch repair. May act as a 'molecular matchmaker', a protein that promotes the formation of a stable complex between two or more DNA-binding proteins in an ATP-dependent manner without itself being part of a final effector complex. The chain is DNA mismatch repair protein MutL from Exiguobacterium sibiricum (strain DSM 17290 / CCUG 55495 / CIP 109462 / JCM 13490 / 255-15).